The chain runs to 505 residues: ATP synthase subunit alpha (505 aa).

Gly172–Thr179 is a binding site for ATP.

The protein belongs to the ATPase alpha/beta chains family. F-type ATPases have 2 components, CF(1) - the catalytic core - and CF(0) - the membrane proton channel. CF(1) has five subunits: alpha(3), beta(3), gamma(1), delta(1), epsilon(1). CF(0) has three main subunits: a(1), b(2) and c(9-12). The alpha and beta chains form an alternating ring which encloses part of the gamma chain. CF(1) is attached to CF(0) by a central stalk formed by the gamma and epsilon chains, while a peripheral stalk is formed by the delta and b chains.

Its subcellular location is the cell inner membrane. It carries out the reaction ATP + H2O + 4 H(+)(in) = ADP + phosphate + 5 H(+)(out). Its function is as follows. Produces ATP from ADP in the presence of a proton gradient across the membrane. The alpha chain is a regulatory subunit. The chain is ATP synthase subunit alpha from Syntrophobacter fumaroxidans (strain DSM 10017 / MPOB).